A 414-amino-acid chain; its full sequence is Serine/threonine transporter SstT (414 aa).

Over T2 to H15 the chain is Cytoplasmic. A helical transmembrane segment spans residues G16–S36. Over K37 to L45 the chain is Periplasmic. Residues L46–V66 traverse the membrane as a helical segment. Residues M67 to P83 lie on the Cytoplasmic side of the membrane. The chain crosses the membrane as a helical span at residues I84–F104. At A105 to D142 the chain is on the periplasmic side. A helical membrane pass occupies residues A143–L163. At R164 to N179 the chain is on the cytoplasmic side. Residues A180–V200 form a helical membrane-spanning segment. Residues S201 to Q217 are Periplasmic-facing. A helical transmembrane segment spans residues L218–V238. Residues W239–N299 lie on the Cytoplasmic side of the membrane. The chain crosses the membrane as a helical span at residues M300 to I320. Over P321–S331 the chain is Periplasmic. A helical membrane pass occupies residues V332–I352. The Cytoplasmic portion of the chain corresponds to P353–N414.

It belongs to the dicarboxylate/amino acid:cation symporter (DAACS) (TC 2.A.23) family.

The protein resides in the cell inner membrane. The enzyme catalyses L-serine(in) + Na(+)(in) = L-serine(out) + Na(+)(out). The catalysed reaction is L-threonine(in) + Na(+)(in) = L-threonine(out) + Na(+)(out). In terms of biological role, involved in the import of serine and threonine into the cell, with the concomitant import of sodium (symport system). This Shigella boydii serotype 4 (strain Sb227) protein is Serine/threonine transporter SstT.